The sequence spans 122 residues: Venom protein 7.1 (122 aa).

An N-terminal signal peptide occupies residues methionine 1 to alanine 19.

Contains 3 disulfide bonds. In terms of tissue distribution, expressed by the venom gland.

It is found in the secreted. This Lychas mucronatus (Chinese swimming scorpion) protein is Venom protein 7.1.